Here is a 212-residue protein sequence, read N- to C-terminus: Pyrrolidone-carboxylate peptidase (212 aa).

Active-site residues include Glu-78, Cys-141, and His-165.

This sequence belongs to the peptidase C15 family. As to quaternary structure, homotetramer.

It localises to the cytoplasm. It carries out the reaction Release of an N-terminal pyroglutamyl group from a polypeptide, the second amino acid generally not being Pro.. Functionally, removes 5-oxoproline from various penultimate amino acid residues except L-proline. The sequence is that of Pyrrolidone-carboxylate peptidase from Staphylococcus aureus (strain NCTC 8325 / PS 47).